Here is a 1345-residue protein sequence, read N- to C-terminus: Membrane-anchored lipid-binding protein LAM4 (1345 aa).

Topologically, residues 1 to 1197 are cytoplasmic; the sequence is MTRDSKKKHH…NFSSEIFMNK (1197 aa). 7 disordered regions span residues 51–80, 115–134, 139–164, 190–302, 356–397, 425–447, and 489–531; these read RVGGNPDIPSLLKPETFTESPAKGSQKAAA, SLKGRFQDGNSNSNSVPSLS, EKEKLQSGKREGSSNQAEEKTPDGHD, DADN…SLDD, LPEA…KPRR, SFNSSNGLTNNDPEYEDREPREM, and STII…NGRQ. At threonine 66 the chain carries Phosphothreonine. Low complexity predominate over residues 216–228; that stretch reads SENSTNNKNTSST. The segment covering 246-271 has biased composition (polar residues); the sequence is SKSSTPSNQQLNTTEAGSKSKPSSLS. Over residues 283 to 294 the composition is skewed to low complexity; that stretch reads HSNSHSSSNAIS. The span at 425 to 436 shows a compositional bias: polar residues; sequence SFNSSNGLTNND. Residues 498–516 are compositionally biased toward low complexity; sequence SNGRPSSGLRRSSSKSFSS. In terms of domain architecture, GRAM spans 549–616; it reads EFHAIFKDSG…FKTIVQIEKR (68 aa). The segment covering 665 to 677 has biased composition (low complexity); that stretch reads SNSNNTNSSSNSI. Residues 665–722 form a disordered region; that stretch reads SNSNNTNSSSNSISDDENDDYDDDYDDYGDDDDDLYDNSNNISDSTDMTSSVSIGKPE. A compositionally biased stretch (acidic residues) spans 678-700; sequence SDDENDDYDDDYDDYGDDDDDLY. A Phosphoserine modification is found at serine 747. VASt domains lie at 758–930 and 967–1139; these read NEKL…TRSA and DDSI…SRAK. A disordered region spans residues 930–963; that stretch reads ATKRKRSSKENTVTVSTLPKMEPSSHAPTEPDIQ. The span at 1141–1158 shows a compositional bias: basic residues; that stretch reads KKPVKKVMKSHDKHRPFH. Positions 1141–1172 are disordered; it reads KKPVKKVMKSHDKHRPFHSKVEQKSSESRKSD. The span at 1159 to 1172 shows a compositional bias: basic and acidic residues; sequence SKVEQKSSESRKSD. Residues 1198-1218 form a helical membrane-spanning segment; it reads LLSPQKLFLILGLTIMLFWSP. Residues 1219–1345 lie on the Lumenal side of the membrane; it reads RLHVFQEKNN…NIERDANDLS (127 aa).

This sequence belongs to the YSP2 family.

The protein localises to the endoplasmic reticulum membrane. In terms of biological role, may be involved in sterol transfer between intracellular membranes. The protein is Membrane-anchored lipid-binding protein LAM4 of Saccharomyces cerevisiae (strain ATCC 204508 / S288c) (Baker's yeast).